Consider the following 376-residue polypeptide: TraB domain-containing protein (376 aa).

The residue at position 1 (methionine 1) is an N-acetylmethionine. Residue threonine 64 is modified to Phosphothreonine.

The chain is TraB domain-containing protein (Trabd) from Mus musculus (Mouse).